Reading from the N-terminus, the 335-residue chain is Protein BRASSINAZOLE-RESISTANT 2 (335 aa).

Residues 1-19 (MTSDGATSTSAAAAAAAMA) show a composition bias toward low complexity. 3 disordered regions span residues 1 to 40 (MTSD…RRRR), 85 to 122 (TYRK…FDSP), and 164 to 190 (PPLR…KPLP). Positions 22–103 (RKPSWREREN…PGDMAGSSSR (82 aa)) are required for DNA-binding. Residues 99–120 (GSSSRATPYSSHNQSPLSSTFD) are compositionally biased toward polar residues. Thr-175 carries the post-translational modification Phosphothreonine. A PEST-like region spans residues 231-251 (HAPATIPECDESDSSTVDSGH).

It belongs to the BZR/LAT61 family. Interacts with ASK7/BIN2 through its C-terminal domain and with the bHLH transcription factors BIM1, BIM2 and BIM3 through its C- and N-terminal domains. Interacts (via N-terminus) with REF6 and ELF6. Interacts with MYB30. Interacts with IWS1. Interacts with ASHH2/SDG8. Binds to MYB56 when dephosphorylated in the nucleus of quiescent center (QC) cells. Binds to WRKY46, WRKY54 and WRKY70 to cooperatively regulate the expression of target genes. In terms of processing, phosphorylated by ASK7/BIN2. Phosphorylation increases protein degradation and/or interferes with the nuclear localization. Ubiquitously expressed in cotyledons, leaves, hypocotyls and roots.

It localises to the nucleus. Its subcellular location is the cytoplasm. In terms of biological role, positive regulator of brassinosteroid (BR) signaling. Transcription factor that activates target gene expression by binding specifically to the DNA sequence 5'-CANNTG-3'(E box) through its N-terminal domain. Can bind individually to the promoter as a homodimer or synergistically as a heterodimer with BIM1, BIM2 or BIM3. The C-terminal domain is probably involved in transcriptional activation. Recruits the transcription elongation factor IWS1 to control BR-regulated gene expression. Forms a trimeric complex with IWS1 and ASHH2/SDG8 to regulate BR-regulated gene expression. Promotes quiescent center (QC) self-renewal by cell divisions in the primary root. Binds to the E-boxes of the BRAVO promoter to repress its expression. This chain is Protein BRASSINAZOLE-RESISTANT 2, found in Arabidopsis thaliana (Mouse-ear cress).